We begin with the raw amino-acid sequence, 180 residues long: Trafficking protein particle complex subunit 3 (180 aa).

Residue C68 is the site of S-palmitoyl cysteine attachment.

The protein belongs to the TRAPP small subunits family. BET3 subfamily. Homodimer. Component of the multisubunit transport protein particle (TRAPP) complex, which includes at least TRAPPC2, TRAPPC2L, TRAPPC3, TRAPPC3L, TRAPPC4, TRAPPC5, TRAPPC8, TRAPPC9, TRAPPC10, TRAPPC11 and TRAPPC12. Heterodimer with TRAPPC6A. The heterodimer TRAPPC3-TRAPPC6A interacts with TRAPPC2L. Heterodimer with TRAPPC6b. The heterodimer TRAPPC6B-TRAPPC3 interacts with TRAPPC1 likely providing a core for TRAPP complex formation.

It localises to the golgi apparatus. The protein resides in the cis-Golgi network. It is found in the endoplasmic reticulum. Its function is as follows. May play a role in vesicular transport from endoplasmic reticulum to Golgi. In Homo sapiens (Human), this protein is Trafficking protein particle complex subunit 3.